The following is a 165-amino-acid chain: Large ribosomal subunit protein uL10 (165 aa).

It belongs to the universal ribosomal protein uL10 family. As to quaternary structure, part of the ribosomal stalk of the 50S ribosomal subunit. The N-terminus interacts with L11 and the large rRNA to form the base of the stalk. The C-terminus forms an elongated spine to which L12 dimers bind in a sequential fashion forming a multimeric L10(L12)X complex.

In terms of biological role, forms part of the ribosomal stalk, playing a central role in the interaction of the ribosome with GTP-bound translation factors. This is Large ribosomal subunit protein uL10 from Edwardsiella ictaluri (strain 93-146).